Here is a 930-residue protein sequence, read N- to C-terminus: MPSLLPLVLTFLSVSSPSWCQNSDIESLKASNGDSFPWNNMRLPEYMTPIHYDLMIHANLSTLTFWGKTEVEIIASRPTSTIIMHSHHLQISKATLRRGAGEMLSEEPLKVLEYPAHEQVALLAAQPLLAGSLYTVIIDYAANLSESFHGFYKSTYRTQEGEMRILAATQFEPTAARMAFPCFDEPALKASFSIKIKRDPRHLAISNMPLVKSVNVAEGLIEDHFDITVKMSTYLVAFIISDFKSVSKMTKSGVKVSVYAVPDKINQADYALDAAVTLLEFYEDYFNIPYPLPKQDLAAIPDFQSGAMENWGLTTYRESSLLYDKEKSSASSKLGITMIVSHELAHQWFGNLVTMEWWNDLWLNEGFAKFMEFVSVTVTHPELKVEDYFFGKCFNAMEVDALNSSHPVSTPVENPAQIREMFDDVSYEKGACILNMLRDYLSADTFKRGIVQYLQKYSYKNTKNEDLWNSMMHICPTDGTQTMDGFCSRSQHSSSTSHWRQEVVDVKTMMNTWTLQKGFPLITITVSGRNVHMKQEHYMKGSERFPETGYLWHVPLTFITSKSDSVQRFLLKTKTDVLILPEAVQWIKFNVGMNGYYIVHYADDGWASLSGLLKEAHTTISSNDRASLINNAFQLVSIEKLSIEKALDLTLYLKNETEIMPIFQALNELIPMYKLMEKRDMIEVETQFKDFLLKLLKDLIDKQTWTDEGSVSERMLRSQLLLLACVRNYQPCVQRAERYFREWKSSNGNMSIPIDVTLAVFAVGAQNTEGWDFLYSKYQSSLSSTEKSQIEFSLCTSKDPEKLQWLLDQSFKGEIIKTQEFPHILTLIGRNPVGYPLAWKFLRENWNKLVQKFELGSSSIAHMVMGTTDQFSTRARLEEVKGFFSSLKENGSQLRCVQQTIETIEENIRWMDKNFDKIRLWLQKEKPELL.

Topologically, residues 1-2 (MP) are cytoplasmic. The chain crosses the membrane as a helical; Signal-anchor for type II membrane protein span at residues 3–23 (SLLPLVLTFLSVSSPSWCQNS). The Lumenal segment spans residues 24–930 (DIESLKASNG…WLQKEKPELL (907 aa)). N-linked (GlcNAc...) asparagine glycosylation is found at Asn-59 and Asn-143. Substrate is bound by residues Glu-172 and 306–310 (GAMEN). Residue His-342 participates in Zn(2+) binding. Residue Glu-343 is part of the active site. Zn(2+) is bound by residues His-346 and Glu-365. A disulfide bond links Cys-393 and Cys-432. 2 N-linked (GlcNAc...) asparagine glycosylation sites follow: Asn-403 and Asn-655. The cysteines at positions 725 and 732 are disulfide-linked. N-linked (GlcNAc...) asparagine glycans are attached at residues Asn-749 and Asn-890.

The protein belongs to the peptidase M1 family. As to quaternary structure, monomer. May also exist as a heterodimer; with ERAP2. Interacts with RBMX. Zn(2+) serves as cofactor. N-glycosylated.

It localises to the endoplasmic reticulum membrane. In terms of biological role, aminopeptidase that plays a central role in peptide trimming, a step required for the generation of most HLA class I-binding peptides. Peptide trimming is essential to customize longer precursor peptides to fit them to the correct length required for presentation on MHC class I molecules. Strongly prefers substrates 9-16 residues long. Rapidly degrades 13-mer to a 9-mer and then stops. Preferentially hydrolyzes the residue Leu and peptides with a hydrophobic C-terminus, while it has weak activity toward peptides with charged C-terminus. May play a role in the inactivation of peptide hormones. May be involved in the regulation of blood pressure through the inactivation of angiotensin II and/or the generation of bradykinin in the kidney. This chain is Endoplasmic reticulum aminopeptidase 1 (Erap1), found in Mus musculus (Mouse).